A 2005-amino-acid chain; its full sequence is Structural maintenance of chromosomes flexible hinge domain-containing protein 1 (2005 aa).

The span at methionine 1–serine 13 shows a compositional bias: gly residues. The tract at residues methionine 1–valine 23 is disordered. Alanine 2 carries the post-translational modification N-acetylalanine. Residues threonine 111–glutamate 702 form an ATPase activity domain region. Lysine 1349 is modified (N6-acetyllysine). Residues lysine 1374 and lysine 1496 each participate in a glycyl lysine isopeptide (Lys-Gly) (interchain with G-Cter in SUMO2) cross-link. At threonine 1499 the chain carries Phosphothreonine. One can recognise an SMC hinge domain in the interval glycine 1720–arginine 1847. Residue lysine 1802 is modified to N6-succinyllysine. Serine 1974 carries the post-translational modification Phosphoserine.

It belongs to the SMC family. Highly divergent. In terms of assembly, homodimer; homodimerizes via its SMC hinge domain. Interacts with LRIF1. Sumoylated with SUMO1.

The protein localises to the chromosome. The enzyme catalyses ATP + H2O = ADP + phosphate + H(+). Its function is as follows. Non-canonical member of the structural maintenance of chromosomes (SMC) protein family that plays a key role in epigenetic silencing by regulating chromatin architecture. Promotes heterochromatin formation in both autosomes and chromosome X, probably by mediating the merge of chromatin compartments. Plays a key role in chromosome X inactivation in females by promoting the spreading of heterochromatin. Recruited to inactivated chromosome X by Xist RNA and acts by mediating the merge of chromatin compartments: promotes random chromatin interactions that span the boundaries of existing structures, leading to create a compartment-less architecture typical of inactivated chromosome X. Required to facilitate Xist RNA spreading. Also required for silencing of a subset of clustered autosomal loci in somatic cells, such as the DUX4 locus. Has ATPase activity; may participate in structural manipulation of chromatin in an ATP-dependent manner as part of its role in gene expression regulation. Also plays a role in DNA repair: localizes to sites of DNA double-strand breaks in response to DNA damage to promote the repair of DNA double-strand breaks. Acts by promoting non-homologous end joining (NHEJ) and inhibiting homologous recombination (HR) repair. The protein is Structural maintenance of chromosomes flexible hinge domain-containing protein 1 of Homo sapiens (Human).